Reading from the N-terminus, the 363-residue chain is Putative glutamate--cysteine ligase 2-3 (363 aa).

The protein belongs to the glutamate--cysteine ligase type 2 family. YbdK subfamily.

The enzyme catalyses L-cysteine + L-glutamate + ATP = gamma-L-glutamyl-L-cysteine + ADP + phosphate + H(+). Functionally, ATP-dependent carboxylate-amine ligase which exhibits weak glutamate--cysteine ligase activity. The sequence is that of Putative glutamate--cysteine ligase 2-3 from Rubrobacter xylanophilus (strain DSM 9941 / JCM 11954 / NBRC 16129 / PRD-1).